Here is a 119-residue protein sequence, read N- to C-terminus: Large ribosomal subunit protein bL20 (119 aa).

It belongs to the bacterial ribosomal protein bL20 family.

Its function is as follows. Binds directly to 23S ribosomal RNA and is necessary for the in vitro assembly process of the 50S ribosomal subunit. It is not involved in the protein synthesizing functions of that subunit. This chain is Large ribosomal subunit protein bL20, found in Paracoccus denitrificans (strain Pd 1222).